We begin with the raw amino-acid sequence, 90 residues long: Acyl-CoA-binding protein (90 aa).

Basic and acidic residues predominate over residues 1–16; that stretch reads MGLKEDFEEHAEKAKT. A disordered region spans residues 1–20; that stretch reads MGLKEDFEEHAEKAKTLPEN. The ACB domain maps to 3-88; that stretch reads LKEDFEEHAE…VKQLLGEAAA (86 aa). An acyl-CoA contacts are provided by residues 30–34, Lys56, and Tyr75; that span reads YGLYK.

Belongs to the ACBP family.

Binds medium- and long-chain acyl-CoA esters with very high affinity and may function as an intracellular carrier of acyl-CoA esters. In Ricinus communis (Castor bean), this protein is Acyl-CoA-binding protein.